We begin with the raw amino-acid sequence, 581 residues long: Aspartate--tRNA ligase (581 aa).

E170 provides a ligand contact to L-aspartate. Residues 194-197 (QLFK) form an aspartate region. Position 216 (R216) interacts with L-aspartate. Residues 216 to 218 (RDE) and Q225 contribute to the ATP site. H439 contributes to the L-aspartate binding site. Position 468 (E468) interacts with ATP. L-aspartate is bound at residue R475. 520 to 523 (GFDR) contributes to the ATP binding site.

This sequence belongs to the class-II aminoacyl-tRNA synthetase family. Type 1 subfamily. In terms of assembly, homodimer.

It localises to the cytoplasm. The catalysed reaction is tRNA(Asp) + L-aspartate + ATP = L-aspartyl-tRNA(Asp) + AMP + diphosphate. Functionally, catalyzes the attachment of L-aspartate to tRNA(Asp) in a two-step reaction: L-aspartate is first activated by ATP to form Asp-AMP and then transferred to the acceptor end of tRNA(Asp). The protein is Aspartate--tRNA ligase of Thermosipho melanesiensis (strain DSM 12029 / CIP 104789 / BI429).